A 159-amino-acid polypeptide reads, in one-letter code: Putative ribosomal RNA large subunit methyltransferase H (159 aa).

S-adenosyl-L-methionine is bound by residues Leu76, Gly108, and 127–132 (LSAMTF).

The protein belongs to the RNA methyltransferase RlmH family.

It localises to the cytoplasm. It carries out the reaction pseudouridine(1915) in 23S rRNA + S-adenosyl-L-methionine = N(3)-methylpseudouridine(1915) in 23S rRNA + S-adenosyl-L-homocysteine + H(+). Functionally, specifically methylates the pseudouridine at position 1915 (m3Psi1915) in 23S rRNA. The chain is Putative ribosomal RNA large subunit methyltransferase H from Methanospirillum hungatei JF-1 (strain ATCC 27890 / DSM 864 / NBRC 100397 / JF-1).